Reading from the N-terminus, the 227-residue chain is Cytidylate kinase (227 aa).

12–20 provides a ligand contact to ATP; sequence GPSGSGKGT.

This sequence belongs to the cytidylate kinase family. Type 1 subfamily.

Its subcellular location is the cytoplasm. The enzyme catalyses CMP + ATP = CDP + ADP. It catalyses the reaction dCMP + ATP = dCDP + ADP. This Nitrosococcus oceani (strain ATCC 19707 / BCRC 17464 / JCM 30415 / NCIMB 11848 / C-107) protein is Cytidylate kinase.